Consider the following 295-residue polypeptide: Putative S-adenosyl-L-methionine-dependent methyltransferase Mvan_0910 (295 aa).

Residues D126 and 155 to 156 (DL) each bind S-adenosyl-L-methionine.

This sequence belongs to the UPF0677 family.

Functionally, exhibits S-adenosyl-L-methionine-dependent methyltransferase activity. The sequence is that of Putative S-adenosyl-L-methionine-dependent methyltransferase Mvan_0910 from Mycolicibacterium vanbaalenii (strain DSM 7251 / JCM 13017 / BCRC 16820 / KCTC 9966 / NRRL B-24157 / PYR-1) (Mycobacterium vanbaalenii).